A 318-amino-acid polypeptide reads, in one-letter code: MEKVYIAGAIPEVGLNLLKEHFEVEMYEGEGIIDKATLMEGVKDASALISILSTNVDQEVIDSASNLKIIANYGAGFNNVDVKYAREKDIDVTNTPKASTASTAELTFGLVLAVARRIVEGDKLSRTQGFDGWAPLFFRGREVSGKTIGIIGLGEIGSAVAKRAKAFDMDILYTGPHQKKEKEREIGAKYVDLNTLLENADFITINAAYNPDLHHMIDTEQFKLMKSTAYLINAGRGPIVNEEALVKALEDKQIEGAALDVYEFEPEITEGLKSLDNVVITPHIGNATYEARDMMSKIVANDTIKKLNGETPQFIVNK.

NAD(+)-binding positions include 155-156 (EI), 234-236 (AGR), and D260. R236 is a catalytic residue. E265 is a catalytic residue. The active-site Proton donor is the H283. Residue 283–286 (HIGN) coordinates NAD(+).

The protein belongs to the D-isomer specific 2-hydroxyacid dehydrogenase family.

The polypeptide is Putative 2-hydroxyacid dehydrogenase SH0752 (Staphylococcus haemolyticus (strain JCSC1435)).